Consider the following 99-residue polypeptide: Monothiol glutaredoxin-S11 (99 aa).

Positions 1–99 constitute a Glutaredoxin domain; that stretch reads MDKVMRMSSE…LVPLVKPYLC (99 aa). Position 21 (C21) interacts with [2Fe-2S] cluster.

This sequence belongs to the glutaredoxin family. CC-type subfamily.

It is found in the cytoplasm. Its function is as follows. May only reduce GSH-thiol disulfides, but not protein disulfides. This is Monothiol glutaredoxin-S11 (GRXS11) from Arabidopsis thaliana (Mouse-ear cress).